A 112-amino-acid chain; its full sequence is Large ribosomal subunit protein bL17 (112 aa).

It belongs to the bacterial ribosomal protein bL17 family. As to quaternary structure, part of the 50S ribosomal subunit. Contacts protein L32.

The polypeptide is Large ribosomal subunit protein bL17 (Desulforudis audaxviator (strain MP104C)).